The chain runs to 153 residues: Ribosome maturation factor RimP (153 aa).

The protein belongs to the RimP family.

Its subcellular location is the cytoplasm. Required for maturation of 30S ribosomal subunits. The sequence is that of Ribosome maturation factor RimP from Clostridium botulinum (strain Loch Maree / Type A3).